The chain runs to 315 residues: MDSSGGFQKHTCGHALLLLLLLLAGGAEAFRICAFNAQRLTLAKVAREYVMDTLVRILARCDITVLQEVVDSTGSAIPLLLRELNRFDGSGPYSSLSSPLLGRGAYKEKYAYIYRSHRTQVLNFYLYPDEDDLFAREPFVGQFSLPSKVLPSLVLVPLHTTPKAVEPELKALYEVFLDVSQRWQSEDVILLGDFNADCASLTKKRLDELVLRTQAGFHWAVADGVDTTVRASTHCTYDRIVLHGERLQSLLRNAGAFDFPQSFGLTEEEALNISDHYPVEVELSRAVHRIQPLSLATLLLSLLLLLLSPQLGLAA.

A signal peptide spans 1–29 (MDSSGGFQKHTCGHALLLLLLLLAGGAEA). Active-site residues include Glu-108 and His-159. Residues Cys-198 and Cys-235 are joined by a disulfide bond. The N-linked (GlcNAc...) asparagine glycan is linked to Asn-272.

This sequence belongs to the DNase I family.

It localises to the endoplasmic reticulum. This chain is Deoxyribonuclease-1-like 1 (DNASE1L1), found in Sus scrofa (Pig).